A 216-amino-acid chain; its full sequence is MIDPLAALVPVVVEQTSRGERSFDIFSRLLRERIVFVTGEVEDNMASLIVAQLLFLESENPKKDIYMYINSPGGVVTAGMAIHDTMQYIRPRVGTVCIGQAASMGSFLLAAGEPGMRVALTNARVMVHQPSGGARGMASDIEIQAKEILRIRKRMNDLYVKYTGKSLKDIEKAMDRDTFLEADEAKEFGIVDHVYDRRPALPGDDAPRDVSEGPTP.

The active-site Nucleophile is serine 103. Histidine 128 is an active-site residue. The interval 197 to 216 (RRPALPGDDAPRDVSEGPTP) is disordered.

Belongs to the peptidase S14 family. Fourteen ClpP subunits assemble into 2 heptameric rings which stack back to back to give a disk-like structure with a central cavity, resembling the structure of eukaryotic proteasomes.

The protein resides in the cytoplasm. It catalyses the reaction Hydrolysis of proteins to small peptides in the presence of ATP and magnesium. alpha-casein is the usual test substrate. In the absence of ATP, only oligopeptides shorter than five residues are hydrolyzed (such as succinyl-Leu-Tyr-|-NHMec, and Leu-Tyr-Leu-|-Tyr-Trp, in which cleavage of the -Tyr-|-Leu- and -Tyr-|-Trp bonds also occurs).. Functionally, cleaves peptides in various proteins in a process that requires ATP hydrolysis. Has a chymotrypsin-like activity. Plays a major role in the degradation of misfolded proteins. The chain is ATP-dependent Clp protease proteolytic subunit from Sphingopyxis alaskensis (strain DSM 13593 / LMG 18877 / RB2256) (Sphingomonas alaskensis).